Reading from the N-terminus, the 474-residue chain is Aspartyl/glutamyl-tRNA(Asn/Gln) amidotransferase subunit B (474 aa).

It belongs to the GatB/GatE family. GatB subfamily. Heterotrimer of A, B and C subunits.

It catalyses the reaction L-glutamyl-tRNA(Gln) + L-glutamine + ATP + H2O = L-glutaminyl-tRNA(Gln) + L-glutamate + ADP + phosphate + H(+). The catalysed reaction is L-aspartyl-tRNA(Asn) + L-glutamine + ATP + H2O = L-asparaginyl-tRNA(Asn) + L-glutamate + ADP + phosphate + 2 H(+). In terms of biological role, allows the formation of correctly charged Asn-tRNA(Asn) or Gln-tRNA(Gln) through the transamidation of misacylated Asp-tRNA(Asn) or Glu-tRNA(Gln) in organisms which lack either or both of asparaginyl-tRNA or glutaminyl-tRNA synthetases. The reaction takes place in the presence of glutamine and ATP through an activated phospho-Asp-tRNA(Asn) or phospho-Glu-tRNA(Gln). The protein is Aspartyl/glutamyl-tRNA(Asn/Gln) amidotransferase subunit B of Desulfotalea psychrophila (strain LSv54 / DSM 12343).